Consider the following 352-residue polypeptide: GTPase Obg (352 aa).

An Obg domain is found at 1 to 159 (MHFLDQAKIY…MWVWLRLKLL (159 aa)). An OBG-type G domain is found at 160–327 (ADVGLLGLPN…LLDAVLGYLP (168 aa)). GTP is bound by residues 166 to 173 (GLPNAGKS), 191 to 195 (FTTLV), 212 to 215 (DIPG), 279 to 282 (NKLD), and 308 to 310 (SGA). Mg(2+)-binding residues include serine 173 and threonine 193. Residues 329-352 (STSTETKGSEVEEVDEEGGEWSPI) form a disordered region. A compositionally biased stretch (acidic residues) spans 339 to 352 (VEEVDEEGGEWSPI).

The protein belongs to the TRAFAC class OBG-HflX-like GTPase superfamily. OBG GTPase family. In terms of assembly, monomer. It depends on Mg(2+) as a cofactor.

The protein resides in the cytoplasm. In terms of biological role, an essential GTPase which binds GTP, GDP and possibly (p)ppGpp with moderate affinity, with high nucleotide exchange rates and a fairly low GTP hydrolysis rate. Plays a role in control of the cell cycle, stress response, ribosome biogenesis and in those bacteria that undergo differentiation, in morphogenesis control. In Erythrobacter litoralis (strain HTCC2594), this protein is GTPase Obg.